The following is a 294-amino-acid chain: 33 kDa chaperonin (294 aa).

Cystine bridges form between Cys230/Cys232 and Cys263/Cys266.

It belongs to the HSP33 family. In terms of processing, under oxidizing conditions two disulfide bonds are formed involving the reactive cysteines. Under reducing conditions zinc is bound to the reactive cysteines and the protein is inactive.

The protein resides in the cytoplasm. In terms of biological role, redox regulated molecular chaperone. Protects both thermally unfolding and oxidatively damaged proteins from irreversible aggregation. Plays an important role in the bacterial defense system toward oxidative stress. The sequence is that of 33 kDa chaperonin from Chromobacterium violaceum (strain ATCC 12472 / DSM 30191 / JCM 1249 / CCUG 213 / NBRC 12614 / NCIMB 9131 / NCTC 9757 / MK).